The chain runs to 363 residues: MSTSSILHLVREDLRAFAGYSSARTSALQGDVWLNANESAWGNPADPSASTRRYPDPQPQGLRSALAALYGCAPEQLLIGRGSDEAIDLLVRGLCVPERDAVLVTPPVFGMYAVCARLQNAPLVDVPLVDVPDGFHADIPAIVAAALASNAKLVFLCSPSNPAGSAIALDQIEPALQALQGKALVVVDEAYGEFSEVPSAVGLLARYDNLAVLRTLSKAHALAAARIGTLIANAELIAVLRRCQAPYPVPTPCAAMAEQALSAPALEVTRRRIAEVRSERARVHKALVQLPGVRQVYPSQGNFLLVRFDDAEAAFQALLEAGVVVRDQRAVPRLSDALRITLGTHEQNERVLSALQRTQEAAA.

N6-(pyridoxal phosphate)lysine is present on Lys-218.

The protein belongs to the class-II pyridoxal-phosphate-dependent aminotransferase family. Histidinol-phosphate aminotransferase subfamily. In terms of assembly, homodimer. Pyridoxal 5'-phosphate serves as cofactor.

It catalyses the reaction L-histidinol phosphate + 2-oxoglutarate = 3-(imidazol-4-yl)-2-oxopropyl phosphate + L-glutamate. It participates in amino-acid biosynthesis; L-histidine biosynthesis; L-histidine from 5-phospho-alpha-D-ribose 1-diphosphate: step 7/9. This is Histidinol-phosphate aminotransferase from Xanthomonas oryzae pv. oryzae (strain MAFF 311018).